Consider the following 65-residue polypeptide: Stress-associated endoplasmic reticulum protein 2 (65 aa).

Residues 38 to 58 (GPWLLALFVFVVCGSAIFQII) form a helical membrane-spanning segment.

The protein belongs to the RAMP4 family. In terms of assembly, interacts with SEC61B, SEC61A1 and the SEC61 complex. Interacts with CANX.

Its subcellular location is the membrane. The protein localises to the endoplasmic reticulum membrane. Functionally, interacts with target proteins during their translocation into the lumen of the endoplasmic reticulum. Protects unfolded target proteins against degradation during ER stress. May facilitate glycosylation of target proteins after termination of ER stress. May modulate the use of N-glycosylation sites on target proteins. This Bos taurus (Bovine) protein is Stress-associated endoplasmic reticulum protein 2 (SERP2).